The chain runs to 325 residues: Phenylalanine--tRNA ligase alpha subunit (325 aa).

Residue glutamate 251 participates in Mg(2+) binding.

It belongs to the class-II aminoacyl-tRNA synthetase family. Phe-tRNA synthetase alpha subunit type 1 subfamily. In terms of assembly, tetramer of two alpha and two beta subunits. Mg(2+) is required as a cofactor.

It is found in the cytoplasm. The enzyme catalyses tRNA(Phe) + L-phenylalanine + ATP = L-phenylalanyl-tRNA(Phe) + AMP + diphosphate + H(+). This Thermotoga petrophila (strain ATCC BAA-488 / DSM 13995 / JCM 10881 / RKU-1) protein is Phenylalanine--tRNA ligase alpha subunit.